A 143-amino-acid polypeptide reads, in one-letter code: Large ribosomal subunit protein uL11 (143 aa).

Belongs to the universal ribosomal protein uL11 family. Part of the ribosomal stalk of the 50S ribosomal subunit. Interacts with L10 and the large rRNA to form the base of the stalk. L10 forms an elongated spine to which L12 dimers bind in a sequential fashion forming a multimeric L10(L12)X complex. Post-translationally, one or more lysine residues are methylated.

Forms part of the ribosomal stalk which helps the ribosome interact with GTP-bound translation factors. In Rhizorhabdus wittichii (strain DSM 6014 / CCUG 31198 / JCM 15750 / NBRC 105917 / EY 4224 / RW1) (Sphingomonas wittichii), this protein is Large ribosomal subunit protein uL11.